The primary structure comprises 179 residues: Large ribosomal subunit protein uL5 (179 aa).

Belongs to the universal ribosomal protein uL5 family. As to quaternary structure, part of the 50S ribosomal subunit; part of the 5S rRNA/L5/L18/L25 subcomplex. Contacts the 5S rRNA and the P site tRNA. Forms a bridge to the 30S subunit in the 70S ribosome.

In terms of biological role, this is one of the proteins that bind and probably mediate the attachment of the 5S RNA into the large ribosomal subunit, where it forms part of the central protuberance. In the 70S ribosome it contacts protein S13 of the 30S subunit (bridge B1b), connecting the 2 subunits; this bridge is implicated in subunit movement. Contacts the P site tRNA; the 5S rRNA and some of its associated proteins might help stabilize positioning of ribosome-bound tRNAs. The sequence is that of Large ribosomal subunit protein uL5 from Xylella fastidiosa (strain 9a5c).